Consider the following 754-residue polypeptide: Polyadenylate-binding protein, cytoplasmic and nuclear (754 aa).

A compositionally biased stretch (polar residues) spans 1 to 25 (MSAEVSTTPAADNVNGTPEATNAAA). The interval 1 to 52 (MSAEVSTTPAADNVNGTPEATNAAATSAPEVTAVESSSPTSPNNNNQPHSAS) is disordered. The segment covering 36 to 46 (SSSPTSPNNNN) has biased composition (low complexity). RRM domains are found at residues 51–129 (ASLY…WSQR), 139–216 (GNVF…HHIS), 232–309 (TNIY…RAQK), and 335–465 (VNLY…LAQR). 2 disordered regions span residues 365-420 (KVMR…KKSD) and 595-648 (RGGG…EEAP). Positions 366-420 (VMRDSTPAERTETPDSEKEKEVNKENEKKEDEEKAAEEKPKESDEEKKDETKKSD) are enriched in basic and acidic residues. Residues 610 to 633 (GMRGPGYQGRGGPQGGPRPQGGRG) are compositionally biased toward gly residues. Residues 634 to 648 (QNAAAQPAAGREEAP) are compositionally biased toward low complexity. The PABC domain maps to 649-726 (AGALTAQALN…ALSVYDEYMK (78 aa)). Residues 729–754 (GEGEAPADADKPKEAAKETATEENKS) are disordered.

This sequence belongs to the polyadenylate-binding protein type-1 family.

It localises to the cytoplasm. It is found in the nucleus. In terms of biological role, binds the poly(A) tail of mRNA. Appears to be an important mediator of the multiple roles of the poly(A) tail in mRNA biogenesis, stability and translation. In the nucleus, involved in both mRNA cleavage and polyadenylation. Is also required for efficient mRNA export to the cytoplasm. Acts in concert with a poly(A)-specific nuclease (PAN) to affect poly(A) tail shortening, which may occur concomitantly with either nucleocytoplasmic mRNA transport or translational initiation. In the cytoplasm, stimulates translation initiation and regulates mRNA decay through translation termination-coupled poly(A) shortening, probably mediated by PAN. In Aspergillus clavatus (strain ATCC 1007 / CBS 513.65 / DSM 816 / NCTC 3887 / NRRL 1 / QM 1276 / 107), this protein is Polyadenylate-binding protein, cytoplasmic and nuclear (pab1).